The primary structure comprises 513 residues: MTSADAPRPQLKIRLIHLDTGRENVAVMSRRSKALRPEVFSGFSRVEIRRNAKSVLATLLITDDDALVGPDELGLAEPAFRRFGEPAGTFVTVSPATPPDSLDAVRGKIQGRTLSAAEITAIVNDLTRYRYSDMEIAAFLIGAARFMTSDELLALVSAMASVGTQLRWDRPIVVDKHCIGGIPGNRTSMILVPIVAAHGLTIPKTSSRAITSPAGTADTMEVLARVDVSVAEMKEIVAACNGCLIWGGHVNLSPADDILISVERPLCLDTREQMVASIMSKKLAAGSTHLLVDLPVGPTAKVASALDAMRLRKLFEFVGDHFGIAVETITTDGRQPIGNGIGPVLEAQDVMAVLGNDPKAPADLREKSLRLAAHLLEYDPHLRGGAGYARARELLESGAALKQMQKIIDNQGPSTCHKDLGTLTAEVTAERDGVVSAIDCLQLNRLARTAGAPIDKGAGIRLFKKVGDRVEAGEPLYRIYAFDPAERELAVAAAKLACGYTVDDAQTFREQVM.

Belongs to the thymidine/pyrimidine-nucleoside phosphorylase family. Type 2 subfamily.

The enzyme catalyses thymidine + phosphate = 2-deoxy-alpha-D-ribose 1-phosphate + thymine. The chain is Putative thymidine phosphorylase from Rhodopseudomonas palustris (strain BisB18).